A 235-amino-acid chain; its full sequence is Small ribosomal subunit protein uS3 (235 aa).

Residues 39-107 (IRTYIENELK…ETHLNIVEVR (69 aa)) form the KH type-2 domain. Residues 215 to 235 (SERRAVEGAGDGGGQRRRENA) form a disordered region.

It belongs to the universal ribosomal protein uS3 family. In terms of assembly, part of the 30S ribosomal subunit. Forms a tight complex with proteins S10 and S14.

Binds the lower part of the 30S subunit head. Binds mRNA in the 70S ribosome, positioning it for translation. The protein is Small ribosomal subunit protein uS3 of Chelativorans sp. (strain BNC1).